Reading from the N-terminus, the 178-residue chain is Large ribosomal subunit protein uL6 (178 aa).

This sequence belongs to the universal ribosomal protein uL6 family. As to quaternary structure, part of the 50S ribosomal subunit.

This protein binds to the 23S rRNA, and is important in its secondary structure. It is located near the subunit interface in the base of the L7/L12 stalk, and near the tRNA binding site of the peptidyltransferase center. The chain is Large ribosomal subunit protein uL6 from Staphylococcus epidermidis (strain ATCC 35984 / DSM 28319 / BCRC 17069 / CCUG 31568 / BM 3577 / RP62A).